Here is a 181-residue protein sequence, read N- to C-terminus: Adenine phosphoribosyltransferase (181 aa).

The protein belongs to the purine/pyrimidine phosphoribosyltransferase family. As to quaternary structure, homodimer.

The protein resides in the cytoplasm. The catalysed reaction is AMP + diphosphate = 5-phospho-alpha-D-ribose 1-diphosphate + adenine. The protein operates within purine metabolism; AMP biosynthesis via salvage pathway; AMP from adenine: step 1/1. In terms of biological role, catalyzes a salvage reaction resulting in the formation of AMP, that is energically less costly than de novo synthesis. This chain is Adenine phosphoribosyltransferase, found in Methylobacterium radiotolerans (strain ATCC 27329 / DSM 1819 / JCM 2831 / NBRC 15690 / NCIMB 10815 / 0-1).